Here is a 247-residue protein sequence, read N- to C-terminus: Serine protease 1 (247 aa).

The signal sequence occupies residues 1 to 15 (MNPLLILTFVAAALA). Positions 16–23 (APFDDDDK) are cleaved as a propeptide — activation peptide. The Peptidase S1 domain occupies 24-244 (IVGGYNCEEN…YVKWIKNTIA (221 aa)). 5 disulfides stabilise this stretch: C30-C160, C48-C64, C139-C206, C171-C185, and C196-C220. H63 (charge relay system) is an active-site residue. The Ca(2+) site is built by E75, N77, V80, and E85. The active-site Charge relay system is the D107. Y154 bears the Sulfotyrosine mark. S200 functions as the Charge relay system in the catalytic mechanism.

The protein belongs to the peptidase S1 family. In terms of assembly, interacts with SERPINA1. Ca(2+) serves as cofactor. In terms of processing, occurs in a single-chain form and a two-chain form, produced by proteolytic cleavage after Arg-122. Sulfation at Tyr-154 increases selectivity towards basic versus apolar residues at the P2' position of inhibitors that bind in a substrate-like fashion. Although the increase in selectivity is relatively small, it may facilitate digestion of a broader range of dietary proteins.

It is found in the secreted. The protein resides in the extracellular space. It carries out the reaction Preferential cleavage: Arg-|-Xaa, Lys-|-Xaa.. Has activity against the synthetic substrates Boc-Phe-Ser-Arg-Mec, Boc-Leu-Thr-Arg-Mec, Boc-Gln-Ala-Arg-Mec and Boc-Val-Pro-Arg-Mec. The single-chain form is more active than the two-chain form against all of these substrates. This is Serine protease 1 from Homo sapiens (Human).